A 435-amino-acid polypeptide reads, in one-letter code: Galactomannan galactosyltransferase 1 (435 aa).

At 1 to 20 (MAKFGSRNKSPKWISNGCCF) the chain is on the cytoplasmic side. A helical; Signal-anchor for type II membrane protein membrane pass occupies residues 21–41 (LLGAFTALLLLWGLCSFIIPI). Topologically, residues 42-435 (PNTDPKLNSV…SPLPFGYPAA (394 aa)) are lumenal. 2 N-linked (GlcNAc...) asparagine glycosylation sites follow: asparagine 230 and asparagine 328. Positions 321-354 (EIVKTYENISERYDEVERKVEGLRRRHAEKVSEK) form a coiled coil.

The protein belongs to the glycosyltransferase 34 family.

The protein resides in the golgi apparatus membrane. In terms of biological role, galactomannan galactosyltransferase (GMGT) involved in galactomannan biosynthesis in seed endosperm. GMGT specificity is an important factor regulating the distribution and amount of alpha-1,6-galactose (Gal) substitution of the beta-1,4-linked mannan backbone. The chain is Galactomannan galactosyltransferase 1 (GMGT1) from Cyamopsis tetragonoloba (Guar).